The following is a 329-amino-acid chain: Sex comb on midleg-like protein 1 (329 aa).

Residues Ser-138 and Ser-238 each carry the phosphoserine modification. The disordered stretch occupies residues 138-157; it reads SPTLPVSRRENNSPSNLPRP. In terms of domain architecture, SAM spans 258–325; that stretch reads WSVEAVVLFL…YYIDRLKQGK (68 aa).

It belongs to the SCM family. Ubiquitous. Expressed in fetal and adult tissues.

It localises to the nucleus. Putative Polycomb group (PcG) protein. PcG proteins act by forming multiprotein complexes, which are required to maintain the transcriptionally repressive state of homeotic genes throughout development. May be involved in spermatogenesis during sexual maturation. The chain is Sex comb on midleg-like protein 1 (SCML1) from Homo sapiens (Human).